A 252-amino-acid chain; its full sequence is Trans-aconitate 2-methyltransferase (252 aa).

This sequence belongs to the methyltransferase superfamily. Tam family.

The protein localises to the cytoplasm. The catalysed reaction is trans-aconitate + S-adenosyl-L-methionine = (E)-3-(methoxycarbonyl)pent-2-enedioate + S-adenosyl-L-homocysteine. Its function is as follows. Catalyzes the S-adenosylmethionine monomethyl esterification of trans-aconitate. This is Trans-aconitate 2-methyltransferase from Escherichia fergusonii (strain ATCC 35469 / DSM 13698 / CCUG 18766 / IAM 14443 / JCM 21226 / LMG 7866 / NBRC 102419 / NCTC 12128 / CDC 0568-73).